The primary structure comprises 805 residues: Leucine--tRNA ligase (805 aa).

The short motif at 40 to 51 is the 'HIGH' region element; it reads PYPSGSGLHVGH. The 'KMSKS' region motif lies at 576 to 580; that stretch reads KMSKS. K579 contacts ATP.

Belongs to the class-I aminoacyl-tRNA synthetase family.

It is found in the cytoplasm. The catalysed reaction is tRNA(Leu) + L-leucine + ATP = L-leucyl-tRNA(Leu) + AMP + diphosphate. The sequence is that of Leucine--tRNA ligase from Chlorobium phaeovibrioides (strain DSM 265 / 1930) (Prosthecochloris vibrioformis (strain DSM 265)).